The following is a 428-amino-acid chain: MERRRVTSATRRSYVSSSEMVVGGRRLGPGTRLSLARMPPPLPARVDFSLAGALNSGFKETRASERAEMMELNDRFASYIEKVRFLEQQNKALAAELNQLRAKEPTKLADVYQAELRELRLRLDQLTANSARLEVERDNLAQDLGTLRQKLQDETNQRLEAENNLAAYRQEADEATLARLDLERKIESLEEEIRFLRKIHEEEVRELQEQLAQQQVHVEMDVAKPDLTAALREIRTQYEAVASSNMHEAEEWYRSKFADLNDAAARNAELLRQAKHEANDYRRQLQALTCDLESLRGTNESLERQMREQEERHAREAASYQEALARLEEEGQSLKDEMARHLQEYQDLLNVKLALDIEIATYRKLLEGEENRITIPVQTFSNLQIRETSLDTKSVSEGHLKRNIVVKTVEMRDGEVIKESKQEHKDVM.

Positions 1–68 are head; it reads MERRRVTSAT…KETRASERAE (68 aa). T7 bears the Phosphothreonine; by AURKB and ROCK1 mark. An Omega-N-methylarginine modification is found at R12. The residue at position 13 (S13) is a Phosphoserine; by AURKB and ROCK1. Residues R26 and R32 each carry the citrulline modification. S34 is subject to Phosphoserine; by AURKB and ROCK1. An IF rod domain is found at 65-373; it reads ERAEMMELND…KLLEGEENRI (309 aa). The interval 69-100 is coil 1A; that stretch reads MMELNDRFASYIEKVRFLEQQNKALAAELNQL. S78 carries the post-translational modification Phosphoserine. The interval 101–111 is linker 1; it reads RAKEPTKLADV. Phosphothreonine occurs at positions 106 and 146. Positions 112 to 210 are coil 1B; the sequence is YQAELRELRL…EEEVRELQEQ (99 aa). Residues 211-226 are linker 12; sequence LAQQQVHVEMDVAKPD. The tract at residues 227–248 is coil 2A; it reads LTAALREIRTQYEAVASSNMHE. The tract at residues 249–252 is linker 2; it reads AEEW. The tract at residues 253–373 is coil 2B; it reads YRSKFADLND…KLLEGEENRI (121 aa). Residue R266 is modified to Citrulline. S319 bears the Phosphoserine mark. Residues 374–428 form a tail region; the sequence is TIPVQTFSNLQIRETSLDTKSVSEGHLKRNIVVKTVEMRDGEVIKESKQEHKDVM. Residue T379 is modified to Phosphothreonine. S381 carries the post-translational modification Phosphoserine. Residues R402 and R412 each carry the citrulline modification.

This sequence belongs to the intermediate filament family. As to quaternary structure, interacts with SYNM. Phosphorylated by PKN1.

It is found in the cytoplasm. Its function is as follows. GFAP, a class-III intermediate filament, is a cell-specific marker that, during the development of the central nervous system, distinguishes astrocytes from other glial cells. The sequence is that of Glial fibrillary acidic protein (GFAP) from Bos taurus (Bovine).